A 297-amino-acid chain; its full sequence is 4-hydroxy-tetrahydrodipicolinate synthase (297 aa).

Thr49 contacts pyruvate. The Proton donor/acceptor role is filled by Tyr137. Catalysis depends on Lys165, which acts as the Schiff-base intermediate with substrate. Residue Ile208 coordinates pyruvate.

It belongs to the DapA family. As to quaternary structure, homotetramer; dimer of dimers.

The protein localises to the cytoplasm. It carries out the reaction L-aspartate 4-semialdehyde + pyruvate = (2S,4S)-4-hydroxy-2,3,4,5-tetrahydrodipicolinate + H2O + H(+). Its pathway is amino-acid biosynthesis; L-lysine biosynthesis via DAP pathway; (S)-tetrahydrodipicolinate from L-aspartate: step 3/4. In terms of biological role, catalyzes the condensation of (S)-aspartate-beta-semialdehyde [(S)-ASA] and pyruvate to 4-hydroxy-tetrahydrodipicolinate (HTPA). The polypeptide is 4-hydroxy-tetrahydrodipicolinate synthase (Gluconacetobacter diazotrophicus (strain ATCC 49037 / DSM 5601 / CCUG 37298 / CIP 103539 / LMG 7603 / PAl5)).